The chain runs to 378 residues: Carbamoyl phosphate synthase small chain (378 aa).

The segment at methionine 1–glutamate 189 is CPSase. Residues serine 47, glycine 241, and glycine 243 each coordinate L-glutamine. The Glutamine amidotransferase type-1 domain occupies histidine 193–arginine 378. The active-site Nucleophile is the cysteine 269. 5 residues coordinate L-glutamine: leucine 270, glutamine 273, asparagine 311, glycine 313, and phenylalanine 314. Residues histidine 353 and glutamate 355 contribute to the active site.

The protein belongs to the CarA family. In terms of assembly, composed of two chains; the small (or glutamine) chain promotes the hydrolysis of glutamine to ammonia, which is used by the large (or ammonia) chain to synthesize carbamoyl phosphate. Tetramer of heterodimers (alpha,beta)4.

It carries out the reaction hydrogencarbonate + L-glutamine + 2 ATP + H2O = carbamoyl phosphate + L-glutamate + 2 ADP + phosphate + 2 H(+). The enzyme catalyses L-glutamine + H2O = L-glutamate + NH4(+). It functions in the pathway amino-acid biosynthesis; L-arginine biosynthesis; carbamoyl phosphate from bicarbonate: step 1/1. The protein operates within pyrimidine metabolism; UMP biosynthesis via de novo pathway; (S)-dihydroorotate from bicarbonate: step 1/3. Functionally, small subunit of the glutamine-dependent carbamoyl phosphate synthetase (CPSase). CPSase catalyzes the formation of carbamoyl phosphate from the ammonia moiety of glutamine, carbonate, and phosphate donated by ATP, constituting the first step of 2 biosynthetic pathways, one leading to arginine and/or urea and the other to pyrimidine nucleotides. The small subunit (glutamine amidotransferase) binds and cleaves glutamine to supply the large subunit with the substrate ammonia. The chain is Carbamoyl phosphate synthase small chain from Pseudomonas syringae pv. tomato (strain ATCC BAA-871 / DC3000).